Consider the following 362-residue polypeptide: GTP cyclohydrolase FolE2 (362 aa).

It belongs to the GTP cyclohydrolase IV family.

The catalysed reaction is GTP + H2O = 7,8-dihydroneopterin 3'-triphosphate + formate + H(+). The protein operates within cofactor biosynthesis; 7,8-dihydroneopterin triphosphate biosynthesis; 7,8-dihydroneopterin triphosphate from GTP: step 1/1. Converts GTP to 7,8-dihydroneopterin triphosphate. This is GTP cyclohydrolase FolE2 from Jannaschia sp. (strain CCS1).